Here is a 260-residue protein sequence, read N- to C-terminus: Adenosylcobinamide-GDP ribazoletransferase (260 aa).

A run of 7 helical transmembrane segments spans residues 31–51 (FYFLPLIGGLIAGLVLIPIYF), 57–77 (IEISGFISLLLYLFLTGSIHL), 108–128 (YGTIGLNVFLLLRYINYSTII), 131–151 (AGLLILAGIISRLSGLAVVVF), 173–193 (FFFWLVLVCFLSLFTPEIAAF), 206–226 (LKYLLLPLTAFILTFIIIRIS), and 240–260 (LIVELTELAVLSTSFFINVHL).

This sequence belongs to the CobS family. Requires Mg(2+) as cofactor.

The protein localises to the cell inner membrane. It catalyses the reaction alpha-ribazole + adenosylcob(III)inamide-GDP = adenosylcob(III)alamin + GMP + H(+). It carries out the reaction alpha-ribazole 5'-phosphate + adenosylcob(III)inamide-GDP = adenosylcob(III)alamin 5'-phosphate + GMP + H(+). Its pathway is cofactor biosynthesis; adenosylcobalamin biosynthesis; adenosylcobalamin from cob(II)yrinate a,c-diamide: step 7/7. Functionally, joins adenosylcobinamide-GDP and alpha-ribazole to generate adenosylcobalamin (Ado-cobalamin). Also synthesizes adenosylcobalamin 5'-phosphate from adenosylcobinamide-GDP and alpha-ribazole 5'-phosphate. In Treponema denticola (strain ATCC 35405 / DSM 14222 / CIP 103919 / JCM 8153 / KCTC 15104), this protein is Adenosylcobinamide-GDP ribazoletransferase.